The sequence spans 886 residues: MKSQTKNTPITGDEIRKEFLNFYHEKLHKIIPSASLIPDDPTVMLTIAGMLPFKPVFLGLKERPSKRATSSQKCIRTNDIENVGVTARHHTFFEMLGNFSFGDYFKKEAIEWAWELVTDIYGLSAENIIVSVFHEDDDSVKIWKEDIGIHPKRIIKLGEKDNFWSSGKTGPCGPCSELYFDFKPEKGVQNIDLEDGDRFIEFYNLVFMQYNRDPDGQLTDLKYKNIDTGMGLERMAQILQKKKNNYETDLIFPIIQKASEISKIDYYSSGERTKISLKIIGDHIRAVIHLISDGVIASNLGRGYILRRLIRRMVRHGRLLGLKNEFLSKLASVGIKLMQENYPDLKNNCDHILSEIKIEEIRFRETLERGEKLLDELISSGQKMITGFKAFELYDTYGFPLELTEEIAQENNIGVDVKGFDKEMSAQKERAKAASQIIDLTLEGSLEREIDLFDKTLFNGYDSLDSDAEIKGIFLESTLVKQASEGQKVLIVLDQTSFYGESGGQVGDIGTILSNDLEVVVDNVIRKKNVFLHYGIVKKGILSLGQKVKTKVNDLARAKAAANHTATHLLQSALKVVVNESVGQKGSLVAFNKLRFDFNSSKPITKDQIFKVETLVNSWILENHSLNIKNMAKSEALERGAVAMFGEKYDDEVRVVDVPSVSMELCGGTHVKTTSELGCFKIISEEGISAGVRRIEALSGQSAFEYFSDKNSLVSQLCDLLKANPNQLLDRVNSLQSELINKNKEIQKMKDEIAYFKYSSLSSSANKVGLFSLIISQLDGLDGNSLQSAALDLTSKLGDKSVVILGGIPDKENRKLLFVVSFGEDLVKRGMHAGKLINDISRICSGGGGGKPNFAQAGAKDIDKLNDALEYARKDLRTKLHSYSDK.

4 residues coordinate Zn(2+): His-564, His-568, Cys-666, and His-670.

The protein belongs to the class-II aminoacyl-tRNA synthetase family. Zn(2+) is required as a cofactor.

Its subcellular location is the cytoplasm. It catalyses the reaction tRNA(Ala) + L-alanine + ATP = L-alanyl-tRNA(Ala) + AMP + diphosphate. In terms of biological role, catalyzes the attachment of alanine to tRNA(Ala) in a two-step reaction: alanine is first activated by ATP to form Ala-AMP and then transferred to the acceptor end of tRNA(Ala). Also edits incorrectly charged Ser-tRNA(Ala) and Gly-tRNA(Ala) via its editing domain. The protein is Alanine--tRNA ligase of Prochlorococcus marinus subsp. pastoris (strain CCMP1986 / NIES-2087 / MED4).